The chain runs to 336 residues: Pyridoxal 5'-phosphate synthase subunit PdxS (336 aa).

Position 62 (D62) interacts with D-ribose 5-phosphate. Catalysis depends on K119, which acts as the Schiff-base intermediate with D-ribose 5-phosphate. G191 lines the D-ribose 5-phosphate pocket. Position 203 (K203) interacts with D-glyceraldehyde 3-phosphate. D-ribose 5-phosphate contacts are provided by residues G254 and 275–276 (GS).

The protein belongs to the PdxS/SNZ family. In terms of assembly, in the presence of PdxT, forms a dodecamer of heterodimers.

The enzyme catalyses aldehydo-D-ribose 5-phosphate + D-glyceraldehyde 3-phosphate + L-glutamine = pyridoxal 5'-phosphate + L-glutamate + phosphate + 3 H2O + H(+). The protein operates within cofactor biosynthesis; pyridoxal 5'-phosphate biosynthesis. Its function is as follows. Catalyzes the formation of pyridoxal 5'-phosphate from ribose 5-phosphate (RBP), glyceraldehyde 3-phosphate (G3P) and ammonia. The ammonia is provided by the PdxT subunit. Can also use ribulose 5-phosphate and dihydroxyacetone phosphate as substrates, resulting from enzyme-catalyzed isomerization of RBP and G3P, respectively. The sequence is that of Pyridoxal 5'-phosphate synthase subunit PdxS from Pyrobaculum calidifontis (strain DSM 21063 / JCM 11548 / VA1).